A 264-amino-acid polypeptide reads, in one-letter code: Thiazole synthase (264 aa).

K106 serves as the catalytic Schiff-base intermediate with DXP. Residues G167, 193 to 194 (AG), and 215 to 216 (NT) each bind 1-deoxy-D-xylulose 5-phosphate.

It belongs to the ThiG family. As to quaternary structure, homotetramer. Forms heterodimers with either ThiH or ThiS.

It is found in the cytoplasm. It carries out the reaction [ThiS sulfur-carrier protein]-C-terminal-Gly-aminoethanethioate + 2-iminoacetate + 1-deoxy-D-xylulose 5-phosphate = [ThiS sulfur-carrier protein]-C-terminal Gly-Gly + 2-[(2R,5Z)-2-carboxy-4-methylthiazol-5(2H)-ylidene]ethyl phosphate + 2 H2O + H(+). The protein operates within cofactor biosynthesis; thiamine diphosphate biosynthesis. Catalyzes the rearrangement of 1-deoxy-D-xylulose 5-phosphate (DXP) to produce the thiazole phosphate moiety of thiamine. Sulfur is provided by the thiocarboxylate moiety of the carrier protein ThiS. In vitro, sulfur can be provided by H(2)S. This is Thiazole synthase from Xanthomonas euvesicatoria pv. vesicatoria (strain 85-10) (Xanthomonas campestris pv. vesicatoria).